Consider the following 239-residue polypeptide: Large ribosomal subunit protein mL67 (239 aa).

Belongs to the mitochondrion-specific ribosomal protein mL67 family. In terms of assembly, component of the mitochondrial large ribosomal subunit (mt-LSU).

It is found in the nucleus. It localises to the mitochondrion. Its function is as follows. Component of the mitochondrial ribosome (mitoribosome), a dedicated translation machinery responsible for the synthesis of mitochondrial genome-encoded proteins, including at least some of the essential transmembrane subunits of the mitochondrial respiratory chain. The mitoribosomes are attached to the mitochondrial inner membrane and translation products are cotranslationally integrated into the membrane. mL67/MHR1 also has extraribosomal functions, being involved in regulation of mitochondrial DNA recombination, maintenance and repair, and generation of homoplasmic cells. mL67/MHR1 also acts as transcription factor involved in regulation of RNA polymerase II-dependent transcription. This chain is Large ribosomal subunit protein mL67 (MHR1), found in Candida albicans (strain SC5314 / ATCC MYA-2876) (Yeast).